The chain runs to 496 residues: Cytochrome P450 monooxygenase cle4 (496 aa).

The chain crosses the membrane as a helical span at residues F12–Y34. C435 serves as a coordination point for heme.

The protein belongs to the cytochrome P450 family. Heme serves as cofactor.

The protein resides in the membrane. The protein operates within secondary metabolite biosynthesis; terpenoid biosynthesis. Functionally, cytochrome P450 monooxygenase; part of the cluster A that mediates the biosynthesis of chevalone E and its oxidized derivatives that possess a unique five-membered lactone ring and can synergistically enhance the cytotoxicity of doxorubicin (DOX) in breast cancer cells. Within the pathway, cle4 is involved in hydroxylation of the chavalone E scaffold at positions C-11 and C-12 and contributes with cle2 to the production of seven oxidation derivatives. The molecular scaffold is commonly biosynthesized by a series of enzymes including the non-reducing polyketide synthase (NR-PKS) cle1 that produces the alpha-pyrone triacetic acid lactone (TAL); The membrane-bound prenyltransferase cle5 that accepts TAL as its substrate to perform a C-3 geranylgeranylation reaction, in which the pathway-dedicated GGPS cle6 is required to provide GGPP, the other substrate of cle5; the FAD-dependent monooxygenase Cle3 that forms an (S)-epoxide ring at the terminal olefin of the geranylgeranyl group; and the terpene cyclase Cle7 that catalyzes the cyclization of the prenyl group that yields the pentacyclic pathway intermediate chevalone E. Chevalone E can derivatize into seven new oxidized analogs by the cytochrome P450 monooxygenases cle2 (acting at C-20) and cle4 (acting at C-11 and C-12). This Aspergillus versicolor protein is Cytochrome P450 monooxygenase cle4.